Consider the following 449-residue polypeptide: Integrator complex subunit 15 (449 aa).

Belongs to the Integrator subunit 15 family. In terms of assembly, component of the Integrator complex, composed of core subunits INTS1, INTS2, INTS3, INTS4, INTS5, INTS6, INTS7, INTS8, INTS9/RC74, INTS10, INTS11/CPSF3L, INTS12, INTS13, INTS14 and INTS15. The core complex associates with protein phosphatase 2A subunits PPP2CA and PPP2R1A, to form the Integrator-PP2A (INTAC) complex. INTS15 is part of the tail subcomplex, composed of INTS10, INTS13, INTS14 and INTS15.

It localises to the nucleus. It is found in the chromosome. Component of the integrator complex, a multiprotein complex that terminates RNA polymerase II (Pol II) transcription in the promoter-proximal region of genes. The integrator complex provides a quality checkpoint during transcription elongation by driving premature transcription termination of transcripts that are unfavorably configured for transcriptional elongation: the complex terminates transcription by (1) catalyzing dephosphorylation of the C-terminal domain (CTD) of Pol II subunit POLR2A/RPB1 and SUPT5H/SPT5, (2) degrading the exiting nascent RNA transcript via endonuclease activity and (3) promoting the release of Pol II from bound DNA. The integrator complex is also involved in terminating the synthesis of non-coding Pol II transcripts, such as enhancer RNAs (eRNAs), small nuclear RNAs (snRNAs), telomerase RNAs and long non-coding RNAs (lncRNAs). INTS15 is part of the integrator tail module that acts as a platform for the recruitment of transcription factors at promoters. Within the integrator complex, INTS15 is required to bridge different integrator modules. The sequence is that of Integrator complex subunit 15 from Homo sapiens (Human).